Here is a 540-residue protein sequence, read N- to C-terminus: Chaperonin GroEL (540 aa).

ATP-binding positions include 29–32 (TLGP), 86–90 (DGTTT), glycine 413, 476–478 (NAA), and aspartate 492.

Belongs to the chaperonin (HSP60) family. Forms a cylinder of 14 subunits composed of two heptameric rings stacked back-to-back. Interacts with the co-chaperonin GroES.

It is found in the cytoplasm. It catalyses the reaction ATP + H2O + a folded polypeptide = ADP + phosphate + an unfolded polypeptide.. Its function is as follows. Together with its co-chaperonin GroES, plays an essential role in assisting protein folding. The GroEL-GroES system forms a nano-cage that allows encapsulation of the non-native substrate proteins and provides a physical environment optimized to promote and accelerate protein folding. This Streptococcus agalactiae protein is Chaperonin GroEL.